The primary structure comprises 476 residues: Glucan endo-1,3-beta-glucosidase 9 (476 aa).

An N-terminal signal peptide occupies residues 1-25 (MARRLFLLLLAVTAGLSLTGTTVRA). N-linked (GlcNAc...) asparagine glycans are attached at residues Asn-88 and Asn-101. Catalysis depends on Glu-122, which acts as the Proton donor. N-linked (GlcNAc...) asparagine glycans are attached at residues Asn-184, Asn-216, Asn-277, Asn-320, Asn-342, Asn-374, and Asn-405. A disulfide bridge connects residues Cys-364 and Cys-424. Ser-453 carries GPI-anchor amidated serine lipidation. Residues 454 to 476 (SSQTPNFFQSWPLLLLFLLSGLF) constitute a propeptide, removed in mature form.

It belongs to the glycosyl hydrolase 17 family. Post-translationally, contains two additional disulfide bonds.

It localises to the secreted. It is found in the cell wall. The protein resides in the cell membrane. It catalyses the reaction Hydrolysis of (1-&gt;3)-beta-D-glucosidic linkages in (1-&gt;3)-beta-D-glucans.. This Arabidopsis thaliana (Mouse-ear cress) protein is Glucan endo-1,3-beta-glucosidase 9.